Here is a 276-residue protein sequence, read N- to C-terminus: F420-dependent methylenetetrahydromethanopterin dehydrogenase (276 aa).

This sequence belongs to the MTD family.

The enzyme catalyses 5,10-methylenetetrahydromethanopterin + oxidized coenzyme F420-(gamma-L-Glu)(n) + 2 H(+) = 5,10-methenyl-5,6,7,8-tetrahydromethanopterin + reduced coenzyme F420-(gamma-L-Glu)(n). Functionally, catalyzes the oxidation of methylene-H(4)MPT to methenyl-H(4)MPT(+). The chain is F420-dependent methylenetetrahydromethanopterin dehydrogenase from Methanosphaera stadtmanae (strain ATCC 43021 / DSM 3091 / JCM 11832 / MCB-3).